We begin with the raw amino-acid sequence, 861 residues long: DNA mismatch repair protein MutS (861 aa).

618 to 625 serves as a coordination point for ATP; sequence GPNMGGKS.

It belongs to the DNA mismatch repair MutS family.

Functionally, this protein is involved in the repair of mismatches in DNA. It is possible that it carries out the mismatch recognition step. This protein has a weak ATPase activity. In Shewanella sp. (strain MR-4), this protein is DNA mismatch repair protein MutS.